We begin with the raw amino-acid sequence, 1934 residues long: MDSTSFLPTFLDVDLTISHIKCLPKDILVKFQGIKSNECEFDYHVLQREIQHTPKVKNNVEIDEFCLVEERVSGEWQRGRVMEKKNELYTVLLIDRGEELRVAGPQIASACGNLFELPPRVVFGIFANILPVGEKWSPKALNYFKSLVGIQVKGYVQAILPLQMFLFEVPKIISQALELQLGRLVDGDSFRLIVEMLEEFPQQMPDLLQHKRPELSLGNKDTSLDIQHVLDKLQPSLSVGSTESVKVSSALSPSKFYCQLIKWTPELENLTAHMTLHYDTVCQETSPTCDNFGLLCVARRRNGQWHRGILQQLLPPNQVKIWFMDYGSSEAIPSIYVKKLKQDFILVPLFSFPCSLTCLHSPDRDARIFQLSIFKQALLGQVVYAHIDWFNKDECLYYVTLQTQESTVNSKCLLKTVGTQVLCPMSDSKISNILSETSVSDVNSFAVESFMGNIEWSIDSLNKKGILKVGFPIKTVQMEIEAAYIAFIAYVLNPSNFWVRTNDHRNEFQEIMKNINKFYDLCENDEMILRKPEPGLFCCARYSKDRRFYRAVITEINGYKINVYFLDYGNTDSIPFFDVKILLPEFCELPALAMCCSLAHIFPVEDLWTKAAIDYFKKLVLNKAILLQVIAKKDDKYTVNIQSVEASENIDVISLMLQAGYAEYFQVELEYFPKSVSEYSMLNSESKNKVNIKKVISALLEGPKSKKYHSNNLVENNLSLPKSLAVNISEFKNPFTLSVGPESSWPYKEYIFRPGTVLEVKCSCYYGPGDFSCQLQCKSEDLKLLMEQIQNYYSIHSDPYEIGQTACVAKYSGKWCRAAVLTQVSKEVDIVFVDYGYQKRVLIEDLCAINPRFLLLESQAFRCCLNHFIEPVSCKLFSWTRKAFRDLWNFISSSRGLLTCIIYALVIIHPNHLYNLVDLQSSFTSAKEFLMNRGSAQYITLSETFPSLFSLYSYCYSSFNIQIGSEEEVYISHIYSPQKFYCQLGRNNKDLEMIETKITESVNLQNFPKYDSNKMRVCISKYVEDGLSYRALAIPTDSSSEFQVYFVDFGNKQLVGENMLRAISAQFPELLFTPMQAIKCFLSDLRDVDIPAEISSWFKDNFLGRSLKAIILSQESDGQLGIELYDGSQYINEKIKVLLHAYGKRHCDQACCMEKSNKINENKRFTTSLKGKTGNNYRHNVINKPSPVTYSERKIDQLMHPKNIHARFLKPSVCYKMEPVSKNKMKTSLNDGLKGIKIVPGAAHILENRRVGQKSVKVVSQSFIRALNQTTSQNPYDLIRPQIKDLPQPQIYLNAKVKGYVSNISNPANFHIQLAENESVIIRLADALNATARRLRERKSVKPLVGDLVVAEYSGDNAIYRAVIKKILPGNSFEVEFIDYGNSAIVNTSKIYELQREFLTVPQLGIHAFLSGVKWNEPDEIWDDKTVDYFTSKVHNKTVYCEFLKKHDQKWEVNMICDEKCVINELLKWKACSKLQKSALQMPQVLSQKVRPGDNEMKKGKSNESEGSMNSNQQLFKIPLEEFKLGQLEKAEMLNVSKSGRFYVKLSKNKKILSDLIVLITKEEKKSPFLSMESIEKGLECLAKSKNTLKWHRSKVEEKYVDDKVLVFLVDCGIYEIVPVCNTKLLSNEIRNIPRQAVPCKWIWFENSKNISFECLFADLEINILFLKYLDAVWEVEILVDDLLLLEYLNLNTVPVEENKLRLAEIVYNIESKTPVSSCTIKSFTWVQFQNDRQYSGIATAVSDPSDFSIQLEDFFDIMKYLFMLLSDLPETLQTLPQEFIIPGSSCLFKYKSEDQWNRVEISEVSPQSLCLVLVDYGFSFYIRYSEIINLKVVPEELLNLPRLSYPCILYGILPAKGKHWSEEAKIFFRDFLSKPDLVFQFREYHSETKLKVDVIHEKNNLADILVASGLATYSKDSPHLDAITATESAKNPI.

6 Tudor domains span residues 59–117 (NVEI…LFEL), 289–347 (CDNF…FILV), 531–589 (KPEP…FCEL), 799–856 (PYEI…FLLL), 1011–1070 (DSNK…FPEL), and 1342–1401 (KPLV…FLTV). The tract at residues 1490–1510 (VRPGDNEMKKGKSNESEGSMN) is disordered. The segment covering 1491 to 1504 (RPGDNEMKKGKSNE) has biased composition (basic and acidic residues). Tudor domains follow at residues 1574–1633 (SIEK…IRNI) and 1780–1838 (FIIP…PEEL).

In Homo sapiens (Human), this protein is Tudor domain-containing protein 15 (TDRD15).